The following is a 350-amino-acid chain: Adenine DNA glycosylase (350 aa).

The active-site Proton donor/acceptor is Glu37. Cys192, Cys199, Cys202, and Cys208 together coordinate [4Fe-4S] cluster.

The protein belongs to the Nth/MutY family. In terms of assembly, monomer. Requires [4Fe-4S] cluster as cofactor.

It catalyses the reaction Hydrolyzes free adenine bases from 7,8-dihydro-8-oxoguanine:adenine mismatched double-stranded DNA, leaving an apurinic site.. Its function is as follows. Adenine glycosylase active on G-A mispairs. MutY also corrects error-prone DNA synthesis past GO lesions which are due to the oxidatively damaged form of guanine: 7,8-dihydro-8-oxoguanine (8-oxo-dGTP). The sequence is that of Adenine DNA glycosylase (mutY) from Escherichia coli (strain K12).